A 587-amino-acid polypeptide reads, in one-letter code: Aspartate--tRNA ligase (587 aa).

Glu-174 lines the L-aspartate pocket. Residues 198–201 (QITK) are aspartate. Arg-220 is a binding site for L-aspartate. Residues 220–222 (RDE) and Gln-229 each bind ATP. An L-aspartate-binding site is contributed by His-443. ATP is bound at residue Glu-477. Residue Arg-484 participates in L-aspartate binding. Position 529 to 532 (529 to 532 (GLDR)) interacts with ATP.

Belongs to the class-II aminoacyl-tRNA synthetase family. Type 1 subfamily. As to quaternary structure, homodimer.

It localises to the cytoplasm. It carries out the reaction tRNA(Asp) + L-aspartate + ATP = L-aspartyl-tRNA(Asp) + AMP + diphosphate. In terms of biological role, catalyzes the attachment of L-aspartate to tRNA(Asp) in a two-step reaction: L-aspartate is first activated by ATP to form Asp-AMP and then transferred to the acceptor end of tRNA(Asp). This is Aspartate--tRNA ligase from Streptococcus pneumoniae (strain Taiwan19F-14).